A 407-amino-acid chain; its full sequence is MKEKVILAYSGGLDTTAIIPWLKENYDYDVVCCCIDVGQGNELDGLEERAKLSGATKLYIEHVTDEFVDEYVMPCVKAGAVYENKYLLGTSMARPVIAKKLVEVAIKENAVAICHGATGKGNDQVRFELGIKALAPDLKIIAPWRCNNTWKMQSREDEIEYCKAHGIDLPFDASHSYSRDRNLWHISHEGLELEDPANAPNYDHLLVLGVSPEKAPNEAESLSLTFEKGIPVALNGKAMKASEIIEELNVLGGKYGIGIIDIVENRVVGMKSRGVYETPGGTILMEAHTQLEELILDRATLSCKKEIGNKFADVVYEGKWFTPLREALQAFVEVTQEYVTGEVKLKLYKGNIIKQGTTSPYSLYNESIASFTTGELYNHHDAEGFINLFGLSLKVRAMKMAEVEKNK.

8–16 (AYSGGLDTT) provides a ligand contact to ATP. L-citrulline is bound by residues Tyr-86 and Ser-91. Gly-116 serves as a coordination point for ATP. The L-aspartate site is built by Thr-118, Asn-122, and Asp-123. Asn-122 lines the L-citrulline pocket. The L-citrulline site is built by Arg-126, Ser-178, Ser-187, Glu-264, and Tyr-276.

Belongs to the argininosuccinate synthase family. Type 1 subfamily. Homotetramer.

The protein localises to the cytoplasm. The enzyme catalyses L-citrulline + L-aspartate + ATP = 2-(N(omega)-L-arginino)succinate + AMP + diphosphate + H(+). The protein operates within amino-acid biosynthesis; L-arginine biosynthesis; L-arginine from L-ornithine and carbamoyl phosphate: step 2/3. This is Argininosuccinate synthase from Lachnoclostridium phytofermentans (strain ATCC 700394 / DSM 18823 / ISDg) (Clostridium phytofermentans).